The chain runs to 251 residues: Phosphate import ATP-binding protein PstB 2 (251 aa).

Residues I5–L246 form the ABC transporter domain. An ATP-binding site is contributed by G37–S44.

Belongs to the ABC transporter superfamily. Phosphate importer (TC 3.A.1.7) family. In terms of assembly, the complex is composed of two ATP-binding proteins (PstB), two transmembrane proteins (PstC and PstA) and a solute-binding protein (PstS).

The protein localises to the cell membrane. The catalysed reaction is phosphate(out) + ATP + H2O = ADP + 2 phosphate(in) + H(+). In terms of biological role, part of the ABC transporter complex PstSACB involved in phosphate import. Responsible for energy coupling to the transport system. The protein is Phosphate import ATP-binding protein PstB 2 of Lactobacillus acidophilus (strain ATCC 700396 / NCK56 / N2 / NCFM).